Consider the following 415-residue polypeptide: Serine/threonine transporter SstT (415 aa).

Transmembrane regions (helical) follow at residues 21–41, 45–65, 85–105, 142–162, 193–213, 217–237, 289–309, and 331–351; these read ILLGLAAGIILASLSTQAALA, LGTLFVGALKAVAPILVLVLV, FLYLIGTFSAALIAVVLSVLF, ALLNANYIGILVWAVGLGIAF, LGIFGLVASTLAETGFGALWG, LLMVLIGGMLLVALVVNPLIV, VAIPLGATINMAGAAITITVL, and VVASLCACGASGVAGGSLLLI.

The protein belongs to the dicarboxylate/amino acid:cation symporter (DAACS) (TC 2.A.23) family.

It localises to the cell inner membrane. The enzyme catalyses L-serine(in) + Na(+)(in) = L-serine(out) + Na(+)(out). It carries out the reaction L-threonine(in) + Na(+)(in) = L-threonine(out) + Na(+)(out). Its function is as follows. Involved in the import of serine and threonine into the cell, with the concomitant import of sodium (symport system). This chain is Serine/threonine transporter SstT, found in Pectobacterium atrosepticum (strain SCRI 1043 / ATCC BAA-672) (Erwinia carotovora subsp. atroseptica).